Here is a 265-residue protein sequence, read N- to C-terminus: 14-3-3-like protein GF14-D (265 aa).

The disordered stretch occupies residues Asp-244–Gln-265. The span at Asp-251 to Gln-265 shows a compositional bias: basic and acidic residues.

The protein belongs to the 14-3-3 family. Interacts with BZR1. Interacts with ABI5.

In terms of biological role, is associated with a DNA binding complex that binds to the G box, a well-characterized cis-acting DNA regulatory element found in plant genes. This Oryza sativa subsp. japonica (Rice) protein is 14-3-3-like protein GF14-D (GF14D).